We begin with the raw amino-acid sequence, 121 residues long: Nitrogenase-stabilizing/protective protein NifW (121 aa).

Belongs to the NifW family. Homotrimer; associates with NifD.

Its function is as follows. May protect the nitrogenase Fe-Mo protein from oxidative damage. This Synechococcus sp. (strain JA-2-3B'a(2-13)) (Cyanobacteria bacterium Yellowstone B-Prime) protein is Nitrogenase-stabilizing/protective protein NifW.